Consider the following 299-residue polypeptide: MLSAGLGLLMLVAVVEFLIGLIGNGVLVVWSFREWMRKFNWSSYNLIILGLAGCRFLLQWLIILDLSLFPLFQSSRWLRYLSIFWVLVSQASLWFATFLSVFYCKKITTFDRPAYLWLKQRAYNLSLWCLLGYFIINLLLTVQIGLMFYHPPQGNSSIRYPFESWQYLYAFRLNSGSYLPLMVFLVSSGMLIVSLYTHHKKMKVHSAGRRDVRAKAHITALKSLGCFLFLHLVYIMASPFSITSKTYPPDLTSVFIWETLMAAYPSLHSLILIMGIPRVKQTCQKILWKTVCARRCWGP.

Position 1 (Met-1) is a topological domain, extracellular. The helical transmembrane segment at 2–22 (LSAGLGLLMLVAVVEFLIGLI) threads the bilayer. The Cytoplasmic portion of the chain corresponds to 23 to 45 (GNGVLVVWSFREWMRKFNWSSYN). A helical membrane pass occupies residues 46–66 (LIILGLAGCRFLLQWLIILDL). The Extracellular portion of the chain corresponds to 67–82 (SLFPLFQSSRWLRYLS). The helical transmembrane segment at 83–103 (IFWVLVSQASLWFATFLSVFY) threads the bilayer. The Cytoplasmic portion of the chain corresponds to 104–127 (CKKITTFDRPAYLWLKQRAYNLSL). The helical transmembrane segment at 128–148 (WCLLGYFIINLLLTVQIGLMF) threads the bilayer. Over 149–175 (YHPPQGNSSIRYPFESWQYLYAFRLNS) the chain is Extracellular. A glycan (N-linked (GlcNAc...) asparagine) is linked at Asn-155. The chain crosses the membrane as a helical span at residues 176-196 (GSYLPLMVFLVSSGMLIVSLY). Topologically, residues 197–223 (THHKKMKVHSAGRRDVRAKAHITALKS) are cytoplasmic. Residues 224-244 (LGCFLFLHLVYIMASPFSITS) traverse the membrane as a helical segment. Over 245–253 (KTYPPDLTS) the chain is Extracellular. A helical membrane pass occupies residues 254–274 (VFIWETLMAAYPSLHSLILIM). Over 275–299 (GIPRVKQTCQKILWKTVCARRCWGP) the chain is Cytoplasmic.

Belongs to the G-protein coupled receptor T2R family.

Its subcellular location is the membrane. Receptor that may play a role in the perception of bitterness and is gustducin-linked. May play a role in sensing the chemical composition of the gastrointestinal content. The activity of this receptor may stimulate alpha gustducin, mediate PLC-beta-2 activation and lead to the gating of TRPM5. In Gorilla gorilla gorilla (Western lowland gorilla), this protein is Taste receptor type 2 member 5 (TAS2R5).